We begin with the raw amino-acid sequence, 365 residues long: 3-methyl-L-tyrosine peroxygenase (365 aa).

A heme-binding site is contributed by 313-317; it reads HIGVC.

Heme serves as cofactor.

The catalysed reaction is 3-methyl-L-tyrosine + H2O2 = 5-hydroxy-3-methyl-L-tyrosine + H2O. Its pathway is antibiotic biosynthesis. Heme-containing peroxygenase that mediates the hydroxylation of 3-methyl-L-tyrosine (3-Me-Tyr) into 3-hydroxy-5-methyl-L-tyrosine (3-OH-5-Me-Tyr) in biosynthesis of saframycin A, a potent antitumor antibiotic that belongs to the tetrahydroisoquinoline family. Involved in biosynthesis of 3-hydroxy-5-methyl-O-methyltyrosine (3-OH-5-Me-OMe-Tyr), a core structure of saframycin A. This is 3-methyl-L-tyrosine peroxygenase from Streptomyces lavendulae.